Consider the following 738-residue polypeptide: Isocitrate dehydrogenase [NADP] (738 aa).

Asparagine 83 and serine 85 together coordinate NADP(+). D-threo-isocitrate contacts are provided by serine 130, asparagine 133, arginine 137, arginine 143, and lysine 253. An NADP(+)-binding site is contributed by asparagine 133. Position 346 (aspartate 346) interacts with Mg(2+). Residues tyrosine 416 and arginine 543 each coordinate D-threo-isocitrate. The Mg(2+) site is built by aspartate 544 and aspartate 548. NADP(+) is bound by residues glycine 580, histidine 585, arginine 596, aspartate 598, and arginine 645.

The protein belongs to the monomeric-type IDH family. In terms of assembly, monomer. Mg(2+) is required as a cofactor. Mn(2+) serves as cofactor.

The protein resides in the cytoplasm. The catalysed reaction is D-threo-isocitrate + NADP(+) = 2-oxoglutarate + CO2 + NADPH. Weakly inhibited by oxaloacetate, 2-oxoglutarate and citrate. Severely inhibited by oxaloacetate plus glyoxylate. Catalyzes the oxidative decarboxylation of isocitrate to 2-oxoglutarate and carbon dioxide with the concomitant reduction of NADP(+). Cannot use NAD(+). The polypeptide is Isocitrate dehydrogenase [NADP] (Corynebacterium glutamicum (strain ATCC 13032 / DSM 20300 / JCM 1318 / BCRC 11384 / CCUG 27702 / LMG 3730 / NBRC 12168 / NCIMB 10025 / NRRL B-2784 / 534)).